Here is a 65-residue protein sequence, read N- to C-terminus: Large ribosomal subunit protein uL29 (65 aa).

This sequence belongs to the universal ribosomal protein uL29 family.

The polypeptide is Large ribosomal subunit protein uL29 (Mycoplasmopsis synoviae (strain 53) (Mycoplasma synoviae)).